Here is a 91-residue protein sequence, read N- to C-terminus: Small ribosomal subunit protein bS16 (91 aa).

Belongs to the bacterial ribosomal protein bS16 family.

The protein is Small ribosomal subunit protein bS16 of Lacticaseibacillus casei (strain BL23) (Lactobacillus casei).